The sequence spans 141 residues: Large ribosomal subunit protein uL14 (141 aa).

This sequence belongs to the universal ribosomal protein uL14 family. Part of the 50S ribosomal subunit. Forms a cluster with proteins L3 and L24e, part of which may contact the 16S rRNA in 2 intersubunit bridges.

Its function is as follows. Binds to 23S rRNA. Forms part of two intersubunit bridges in the 70S ribosome. The polypeptide is Large ribosomal subunit protein uL14 (Pyrococcus abyssi (strain GE5 / Orsay)).